A 295-amino-acid chain; its full sequence is Acetyl-coenzyme A carboxylase carboxyl transferase subunit beta (295 aa).

Positions Met1 to Lys20 are disordered. Residues Leu28–Ala295 enclose the CoA carboxyltransferase N-terminal domain. Positions 32, 35, 51, and 54 each coordinate Zn(2+). The segment at Cys32 to Cys54 adopts a C4-type zinc-finger fold.

The protein belongs to the AccD/PCCB family. Acetyl-CoA carboxylase is a heterohexamer composed of biotin carboxyl carrier protein (AccB), biotin carboxylase (AccC) and two subunits each of ACCase subunit alpha (AccA) and ACCase subunit beta (AccD). The cofactor is Zn(2+).

It is found in the cytoplasm. The enzyme catalyses N(6)-carboxybiotinyl-L-lysyl-[protein] + acetyl-CoA = N(6)-biotinyl-L-lysyl-[protein] + malonyl-CoA. It functions in the pathway lipid metabolism; malonyl-CoA biosynthesis; malonyl-CoA from acetyl-CoA: step 1/1. Component of the acetyl coenzyme A carboxylase (ACC) complex. Biotin carboxylase (BC) catalyzes the carboxylation of biotin on its carrier protein (BCCP) and then the CO(2) group is transferred by the transcarboxylase to acetyl-CoA to form malonyl-CoA. The sequence is that of Acetyl-coenzyme A carboxylase carboxyl transferase subunit beta from Xanthomonas campestris pv. campestris (strain B100).